We begin with the raw amino-acid sequence, 208 residues long: MDYRNFFTGRPTSEICRDLIGRPFYYQAGGEKIGGYIVESEAYLGIYDRAAHSYGGRRSQANEGLWRAGGTIYIYSQRQYVFFDIACQEEGNPQGVLIRAIEPVWGLDQMLKNRGGKDGVLLTNGPAKLMQAMGIKSRNWDLAPLADSPFVIDLTEKKPAKEIVASPRIGIVQADPAWAQAPLRYYVAGNPYVSGMKKRDWADDHGWL.

Belongs to the DNA glycosylase MPG family.

The polypeptide is Putative 3-methyladenine DNA glycosylase (Lactobacillus delbrueckii subsp. bulgaricus (strain ATCC BAA-365 / Lb-18)).